The following is an 80-amino-acid chain: Clavanin-C (80 aa).

Residues 1–19 form the signal peptide; sequence MKTTILILLILGLGINAKS. Residues 20–29 constitute a propeptide that is removed on maturation; that stretch reads LEERKSEEEK. Phenylalanine 52 is subject to Phenylalanine amide. The propeptide occupies 54 to 80; that stretch reads DDQQDNGKFYGHYAEDNGKHWYDTGDQ.

Hemocytes and pharyngeal tissues.

It localises to the secreted. Functionally, has antimicrobial activity against E.coli, L.monocytogenes and C.albicans. This Styela clava (Sea squirt) protein is Clavanin-C.